A 195-amino-acid chain; its full sequence is UPF0316 protein Pcar_2434 (195 aa).

The next 3 membrane-spanning stretches (helical) occupy residues 13–33 (LFLL…IGTL), 45–65 (WAGV…SQVM), and 71–91 (VWTY…GVLI).

It belongs to the UPF0316 family.

Its subcellular location is the cell membrane. The polypeptide is UPF0316 protein Pcar_2434 (Syntrophotalea carbinolica (strain DSM 2380 / NBRC 103641 / GraBd1) (Pelobacter carbinolicus)).